We begin with the raw amino-acid sequence, 516 residues long: GMP synthase [glutamine-hydrolyzing] (516 aa).

The Glutamine amidotransferase type-1 domain maps to 8–198; sequence KILILDFGSQ…VVNICGCDTL (191 aa). The Nucleophile role is filled by Cys-84. Residues His-172 and Glu-174 contribute to the active site. One can recognise a GMPS ATP-PPase domain in the interval 199–391; that stretch reads WNIENIIEND…LGLPYNMLYR (193 aa). 226–232 serves as a coordination point for ATP; sequence SGGVDSS.

As to quaternary structure, homodimer.

The catalysed reaction is XMP + L-glutamine + ATP + H2O = GMP + L-glutamate + AMP + diphosphate + 2 H(+). It functions in the pathway purine metabolism; GMP biosynthesis; GMP from XMP (L-Gln route): step 1/1. Catalyzes the synthesis of GMP from XMP. This is GMP synthase [glutamine-hydrolyzing] from Francisella tularensis subsp. tularensis (strain FSC 198).